Consider the following 273-residue polypeptide: Proteasome subunit beta type-7-A (273 aa).

Residues 1 to 37 constitute a propeptide, removed in mature form; that stretch reads MSQSTVDVPPKGGFSFDLCKRNDMLTQKGLKAPSFLK. Residue T40 is the Nucleophile of the active site.

The protein belongs to the peptidase T1B family. As to quaternary structure, component of the 20S core complex of the 26S proteasome. The 26S proteasome is composed of a core protease (CP), known as the 20S proteasome, capped at one or both ends by the 19S regulatory particle (RP/PA700). The 20S proteasome core is composed of 28 subunits that are arranged in four stacked rings, resulting in a barrel-shaped structure. The two end rings are each formed by seven alpha subunits, and the two central rings are each formed by seven beta subunits. The catalytic chamber with the active sites is on the inside of the barrel.

The protein resides in the cytoplasm. It localises to the nucleus. The enzyme catalyses Cleavage of peptide bonds with very broad specificity.. Its function is as follows. The proteasome is a multicatalytic proteinase complex which is characterized by its ability to cleave peptides with Arg, Phe, Tyr, Leu, and Glu adjacent to the leaving group at neutral or slightly basic pH. The proteasome has an ATP-dependent proteolytic activity. This Arabidopsis thaliana (Mouse-ear cress) protein is Proteasome subunit beta type-7-A (PBB1).